Consider the following 466-residue polypeptide: Histidine--tRNA ligase (466 aa).

The protein belongs to the class-II aminoacyl-tRNA synthetase family. In terms of assembly, homodimer.

Its subcellular location is the cytoplasm. It carries out the reaction tRNA(His) + L-histidine + ATP = L-histidyl-tRNA(His) + AMP + diphosphate + H(+). This chain is Histidine--tRNA ligase, found in Xylella fastidiosa (strain M23).